Consider the following 341-residue polypeptide: D-aspartate oxidase (341 aa).

Residues aspartate 36, lysine 37, threonine 43, serine 44, methionine 50, glycine 307, and isoleucine 311 each coordinate FAD. Residues 339-341 (SKL) carry the Microbody targeting signal motif.

Belongs to the DAMOX/DASOX family. In terms of assembly, homotetramer. Interacts with PEX5; the interaction is direct and required for localization of DDO to the peroxisome. FAD is required as a cofactor. As to expression, expressed in epithelial cells of the renal proximal tubules (not detected in the glomeruli or renal distal tubules), liver, right atrium of heart, lung, chief cells of the gastric mucosa, choroid plexus, pia mater, brain stem, midbrain, pons, medulla oblongata, hypothalamus, hippocampus, cerebral cortex, cerebellum, ependyma, olfactory bulb and the pituitary, pineal, thyroid and adrenal glands (at protein level).

Its subcellular location is the peroxisome matrix. It localises to the cytoplasm. The protein localises to the cytosol. The catalysed reaction is D-aspartate + O2 + H2O = oxaloacetate + H2O2 + NH4(+). It carries out the reaction D-glutamate + O2 + H2O = H2O2 + 2-oxoglutarate + NH4(+). Its function is as follows. Selectively catalyzes the oxidative deamination of acidic amino acids. Suppresses the level of D-aspartate in the brain, an amino acid that can act as an agonist for glutamate receptors. Protects the organism from the toxicity of D-amino acids. May also function in the intestine. The protein is D-aspartate oxidase (DDO) of Sus scrofa (Pig).